We begin with the raw amino-acid sequence, 403 residues long: 8-amino-7-oxononanoate synthase (403 aa).

Arg30 provides a ligand contact to substrate. Residue 121 to 122 (GY) participates in pyridoxal 5'-phosphate binding. Position 146 (His146) interacts with substrate. Ser192, His220, and Thr248 together coordinate pyridoxal 5'-phosphate. Lys251 bears the N6-(pyridoxal phosphate)lysine mark. A substrate-binding site is contributed by Thr367.

It belongs to the class-II pyridoxal-phosphate-dependent aminotransferase family. BioF subfamily. As to quaternary structure, homodimer. Pyridoxal 5'-phosphate is required as a cofactor.

The enzyme catalyses 6-carboxyhexanoyl-[ACP] + L-alanine + H(+) = (8S)-8-amino-7-oxononanoate + holo-[ACP] + CO2. The protein operates within cofactor biosynthesis; biotin biosynthesis. In terms of biological role, catalyzes the decarboxylative condensation of pimeloyl-[acyl-carrier protein] and L-alanine to produce 8-amino-7-oxononanoate (AON), [acyl-carrier protein], and carbon dioxide. The protein is 8-amino-7-oxononanoate synthase of Burkholderia vietnamiensis (strain G4 / LMG 22486) (Burkholderia cepacia (strain R1808)).